Consider the following 633-residue polypeptide: Pentatricopeptide repeat-containing protein At3g24000, mitochondrial (633 aa).

The transit peptide at 1–63 directs the protein to the mitochondrion; that stretch reads MALRFPPRLL…SYIPADRRFY (63 aa). PPR repeat units follow at residues 94–124, 125–159, 160–194, 195–225, 226–260, 261–295, 296–326, 327–361, 362–396, and 397–431; these read DIVM…MPQR, DFVT…GYSP, NEFT…GFDS, NVHV…LESR, NDVS…GFRP, SHFS…GEKL, VAFA…LAKR, DVVS…GIRP, NEIS…GIVP, and EAWH…PTAA. A type E motif region spans residues 432 to 507; the sequence is IWKALLNACR…EPACSWVEIE (76 aa). The tract at residues 508–538 is type E(+) motif; that stretch reads NAIHMFVANDERHPQREEIARKWEEVLAKIK. Residues 539–633 are type DYW motif; that stretch reads ELGYVPDTSH…DGNCSCKDYW (95 aa).

This sequence belongs to the PPR family. PCMP-H subfamily.

The protein resides in the mitochondrion. In Arabidopsis thaliana (Mouse-ear cress), this protein is Pentatricopeptide repeat-containing protein At3g24000, mitochondrial (PCMP-H87).